The following is a 214-amino-acid chain: MASVSPLAKFKLVFLGDQSVGKTSIITRFMYDKFDTTYQPTIGIDFLSKTMYLEDRTVRLQLWDTAGQERFRSLIPSYIRDSSVAIVVYDVSNRQTFLNTSKWIEDVHRERGQSNVIIVLVGNKTDLVEKRQVSISEGEDKGKEYGVMFIETSAKENFNIKALFRKIAAALPGVDSYSLATKSDDMVDVNLKTTSNSSQGEQQGGAGGGGGCSC.

16–23 (GDQSVGKT) provides a ligand contact to GTP. Residues 38–46 (YQPTIGIDF) carry the Effector region motif. GTP is bound by residues 64–68 (DTAGQ), 123–126 (NKTD), and 153–154 (SA). Residues 194–214 (TSNSSQGEQQGGAGGGGGCSC) are disordered. Residues 202-214 (QQGGAGGGGGCSC) are compositionally biased toward gly residues. S-geranylgeranyl cysteine attachment occurs at residues Cys-212 and Cys-214. The residue at position 214 (Cys-214) is a Cysteine methyl ester.

It belongs to the small GTPase superfamily. Rab family. Interacts with the C-terminus of GC5, but not with GC3.

Its subcellular location is the golgi apparatus membrane. It is found in the cytoplasm. It localises to the cytosol. Its function is as follows. Protein transport. Regulator of membrane traffic from the Golgi apparatus towards the endoplasmic reticulum (ER). The polypeptide is Ras-related protein RABH1c (RABH1C) (Arabidopsis thaliana (Mouse-ear cress)).